The sequence spans 134 residues: Acyl carrier protein SF2, chloroplastic (134 aa).

The N-terminal 51 residues, 1–51 (MSTTFCSSVSMQATSLAATTRISFQKPALVSTTNLSFNLRRSIPTRFSISC), are a transit peptide targeting the chloroplast. The region spanning 55–130 (PETVEKVSKI…EAAELIEELV (76 aa)) is the Carrier domain. Ser90 bears the O-(pantetheine 4'-phosphoryl)serine mark.

The protein belongs to the acyl carrier protein (ACP) family. 4'-phosphopantetheine is transferred from CoA to a specific serine of apo-ACP by acpS. This modification is essential for activity because fatty acids are bound in thioester linkage to the sulfhydryl of the prosthetic group.

It is found in the plastid. Its subcellular location is the chloroplast. It functions in the pathway lipid metabolism; fatty acid biosynthesis. Its function is as follows. Carrier of the growing fatty acid chain in fatty acid biosynthesis. In Brassica campestris (Field mustard), this protein is Acyl carrier protein SF2, chloroplastic (Acl1.1).